Consider the following 356-residue polypeptide: Putative transposase y4zB (356 aa).

Low complexity predominate over residues 1 to 19 (MITTGTPTTRRSAAGTAGA). Disordered stretches follow at residues 1-54 (MITT…PLAD) and 334-356 (PPPVNPSHRRPRCSPHQMSFAYV).

It belongs to the transposase 11 family.

The chain is Putative transposase y4zB from Sinorhizobium fredii (strain NBRC 101917 / NGR234).